A 154-amino-acid chain; its full sequence is Ribonuclease H (154 aa).

The region spanning 1 to 142 (MRKQIEIFTD…CDELAKQGAE (142 aa)) is the RNase H type-1 domain. Residues aspartate 10, glutamate 48, aspartate 70, and aspartate 134 each contribute to the Mg(2+) site.

The protein belongs to the RNase H family. In terms of assembly, monomer. Mg(2+) is required as a cofactor.

It localises to the cytoplasm. It catalyses the reaction Endonucleolytic cleavage to 5'-phosphomonoester.. Its function is as follows. Endonuclease that specifically degrades the RNA of RNA-DNA hybrids. In Actinobacillus succinogenes (strain ATCC 55618 / DSM 22257 / CCUG 43843 / 130Z), this protein is Ribonuclease H.